The chain runs to 79 residues: MSFEVFEKLEAKVQQAIDTITLLQMEIEELKEQNNTLSQDVQAAAGSRESLVRENEQLKEEQVVWQERLRALLGKMEEV.

Positions 4 to 78 (EVFEKLEAKV…LRALLGKMEE (75 aa)) form a coiled coil.

This sequence belongs to the ZapB family. Homodimer. The ends of the coiled-coil dimer bind to each other, forming polymers. Interacts with FtsZ.

The protein localises to the cytoplasm. Its function is as follows. Non-essential, abundant cell division factor that is required for proper Z-ring formation. It is recruited early to the divisome by direct interaction with FtsZ, stimulating Z-ring assembly and thereby promoting cell division earlier in the cell cycle. Its recruitment to the Z-ring requires functional FtsA or ZipA. In Pectobacterium atrosepticum (strain SCRI 1043 / ATCC BAA-672) (Erwinia carotovora subsp. atroseptica), this protein is Cell division protein ZapB.